Consider the following 164-residue polypeptide: Reticulon-like protein B22 (164 aa).

In terms of domain architecture, Reticulon spans 1-164 (MGEMGKAMGL…ILEQEAHSDT (164 aa)). 2 consecutive transmembrane segments (helical) span residues 30-50 (SLFS…GLLF) and 117-137 (LISG…SMLC).

The protein localises to the endoplasmic reticulum membrane. This is Reticulon-like protein B22 (RTNLB22) from Arabidopsis thaliana (Mouse-ear cress).